The primary structure comprises 893 residues: DNA mismatch repair protein MutS (893 aa).

631-638 (GPNMAGKS) contributes to the ATP binding site. The segment at 821 to 858 (AGRPRVAVRQPQGGRRGASTGQLGLFGMEPAQGGTGVT) is disordered.

Belongs to the DNA mismatch repair MutS family.

Functionally, this protein is involved in the repair of mismatches in DNA. It is possible that it carries out the mismatch recognition step. This protein has a weak ATPase activity. This chain is DNA mismatch repair protein MutS, found in Myxococcus xanthus (strain DK1622).